The following is a 510-amino-acid chain: ATP synthase subunit alpha (510 aa).

170–177 (GDRQTGKT) lines the ATP pocket.

This sequence belongs to the ATPase alpha/beta chains family. As to quaternary structure, F-type ATPases have 2 components, CF(1) - the catalytic core - and CF(0) - the membrane proton channel. CF(1) has five subunits: alpha(3), beta(3), gamma(1), delta(1), epsilon(1). CF(0) has three main subunits: a(1), b(2) and c(9-12). The alpha and beta chains form an alternating ring which encloses part of the gamma chain. CF(1) is attached to CF(0) by a central stalk formed by the gamma and epsilon chains, while a peripheral stalk is formed by the delta and b chains.

The protein localises to the cell inner membrane. The enzyme catalyses ATP + H2O + 4 H(+)(in) = ADP + phosphate + 5 H(+)(out). Its function is as follows. Produces ATP from ADP in the presence of a proton gradient across the membrane. The alpha chain is a regulatory subunit. This chain is ATP synthase subunit alpha, found in Dictyoglomus thermophilum (strain ATCC 35947 / DSM 3960 / H-6-12).